Here is a 340-residue protein sequence, read N- to C-terminus: Nuclear hormone receptor family member nhr-197 (340 aa).

The nuclear receptor DNA-binding region spans 1–75 (MNCVVCSGRA…VGMTLAPLND (75 aa)). NR C4-type zinc fingers lie at residues 3–23 (CVVC…CFAC) and 39–58 (CKRI…CRAC). An NR LBD domain is found at 98–337 (KNDKNYSHFV…KRIMQDLFSN (240 aa)).

It belongs to the nuclear hormone receptor family.

The protein localises to the nucleus. In terms of biological role, orphan nuclear receptor. This chain is Nuclear hormone receptor family member nhr-197 (nhr-197), found in Caenorhabditis elegans.